The sequence spans 384 residues: dTDP-dihydrostreptose--streptidine-6-phosphate dihydrostreptosyltransferase (384 aa).

It catalyses the reaction dTDP-L-dihydrostreptose + streptidine 6-phosphate = O-(1-&gt;4)-alpha-L-dihydrostreptosyl-streptidine 6-phosphate + dTDP + H(+). It participates in antibiotic biosynthesis; streptomycin biosynthesis. Functionally, is probably a dihydrostreptosyl glycosyltransferase, involved in the first glycosylation step condensing streptidine-6-phosphate and dihydrostreptose. The protein is dTDP-dihydrostreptose--streptidine-6-phosphate dihydrostreptosyltransferase (strH) of Streptomyces griseus.